Reading from the N-terminus, the 79-residue chain is Neurotoxin 3FTx-LI (79 aa).

A signal peptide spans 1 to 21 (MKTLLLTLVVVTIVCLDLGYT). 4 disulfide bridges follow: Cys24/Cys43, Cys36/Cys61, Cys65/Cys71, and Cys72/Cys77.

In terms of tissue distribution, expressed by the venom gland.

Its subcellular location is the secreted. Functionally, blocks both the muscle-twitch response to nerve stimulation and the response to exogenous acetylcholine. This is Neurotoxin 3FTx-LI from Bungarus fasciatus (Banded krait).